The chain runs to 237 residues: MIYAQILAGGKGTRMGNVSMPKQFLPLNGKPIIVHTVEKFILNTRFDKILISSPKEWMNHAEDNIKKYISDDRIVVIEGGEDRNETIMNGIRYVEKTFGLNDEDIIVTHDAVRPFLTHRIIEENIDAAIETGAVDTVIEALDTIVESSNHEFITDIPVRDQMYQGQTPQSFNMKKVYNHYQNLSAEKKQILTDACKICLLAGDQVKLVKGEIFNIKITTPYDLKVANAIIQERIAND.

CTP-binding positions include 7–10 and 80–86; these read LAGG and GEDRNET.

Belongs to the IspD/TarI cytidylyltransferase family. TarI subfamily.

It carries out the reaction D-ribitol 5-phosphate + CTP + H(+) = CDP-L-ribitol + diphosphate. Its pathway is cell wall biogenesis; poly(ribitol phosphate) teichoic acid biosynthesis. Functionally, catalyzes the transfer of the cytidylyl group of CTP to D-ribitol 5-phosphate. In Listeria innocua serovar 6a (strain ATCC BAA-680 / CLIP 11262), this protein is Ribitol-5-phosphate cytidylyltransferase.